The following is a 456-amino-acid chain: Hydroxyproline dehydrogenase (456 aa).

2 positions are modified to N6-acetyllysine: Lys-310 and Lys-320.

This sequence belongs to the proline oxidase family. FAD is required as a cofactor.

It carries out the reaction trans-4-hydroxy-L-proline + a quinone = (3R,5S)-1-pyrroline-3-hydroxy-5-carboxylate + a quinol + H(+). The catalysed reaction is L-proline + a quinone = (S)-1-pyrroline-5-carboxylate + a quinol + H(+). In terms of biological role, dehydrogenase that converts trans-4-L-hydroxyproline to delta-1-pyrroline-3-hydroxy-5-carboxylate (Hyp) using ubiquinone-10 as the terminal electron acceptor. Can also use proline as a substrate but with a very much lower efficiency. Does not react with other diastereomers of Hyp: trans-4-D-hydroxyproline and cis-4-L-hydroxyproline. Ubiquininone analogs such as menadione, duroquinone and ubiquinone-1 react more efficiently than oxygen as the terminal electron acceptor during catalysis. The sequence is that of Hydroxyproline dehydrogenase from Rattus norvegicus (Rat).